The chain runs to 303 residues: N-acetyl-D-glucosamine kinase (303 aa).

ATP contacts are provided by residues 4-11 (GFDIGGTK) and 133-140 (GVGGGLVL). Zn(2+) contacts are provided by H157, C177, C179, and C184.

Belongs to the ROK (NagC/XylR) family. NagK subfamily.

The enzyme catalyses N-acetyl-D-glucosamine + ATP = N-acetyl-D-glucosamine 6-phosphate + ADP + H(+). It functions in the pathway cell wall biogenesis; peptidoglycan recycling. In terms of biological role, catalyzes the phosphorylation of N-acetyl-D-glucosamine (GlcNAc) derived from cell-wall degradation, yielding GlcNAc-6-P. In Salmonella agona (strain SL483), this protein is N-acetyl-D-glucosamine kinase.